A 187-amino-acid chain; its full sequence is Elongation factor P (187 aa).

This sequence belongs to the elongation factor P family.

It is found in the cytoplasm. It functions in the pathway protein biosynthesis; polypeptide chain elongation. Involved in peptide bond synthesis. Stimulates efficient translation and peptide-bond synthesis on native or reconstituted 70S ribosomes in vitro. Probably functions indirectly by altering the affinity of the ribosome for aminoacyl-tRNA, thus increasing their reactivity as acceptors for peptidyl transferase. The chain is Elongation factor P from Clavibacter michiganensis subsp. michiganensis (strain NCPPB 382).